The primary structure comprises 273 residues: Pyrroline-5-carboxylate reductase (273 aa).

This sequence belongs to the pyrroline-5-carboxylate reductase family.

The protein localises to the cytoplasm. The catalysed reaction is L-proline + NADP(+) = (S)-1-pyrroline-5-carboxylate + NADPH + 2 H(+). The enzyme catalyses L-proline + NAD(+) = (S)-1-pyrroline-5-carboxylate + NADH + 2 H(+). Its pathway is amino-acid biosynthesis; L-proline biosynthesis; L-proline from L-glutamate 5-semialdehyde: step 1/1. This chain is Pyrroline-5-carboxylate reductase (PROC), found in Pisum sativum (Garden pea).